Reading from the N-terminus, the 362-residue chain is Endopolygalacturonase II (362 aa).

The signal sequence occupies residues 1–21; that stretch reads MHSFASLLAYGLAASATLASA. The propeptide occupies 22-27; the sequence is SPIEAR. Cys30 and Cys45 are oxidised to a cystine. One copy of the PbH1 1 repeat lies at 156 to 186; it reads ADDITLTDITINNADGDTLGGHNTDAFDVGN. Asp201 (proton donor) is an active-site residue. Cysteines 203 and 219 form a disulfide. His223 is a catalytic residue. 3 PbH1 repeats span residues 238 to 259, 267 to 289, and 301 to 322; these read VKNV…RIKT, VSEI…VIQQ, and TNGV…DSKA. Asn240 is a glycosylation site (N-linked (GlcNAc...) (high mannose) asparagine). Cystine bridges form between Cys329–Cys334 and Cys353–Cys362.

It belongs to the glycosyl hydrolase 28 family.

Its subcellular location is the secreted. It catalyses the reaction (1,4-alpha-D-galacturonosyl)n+m + H2O = (1,4-alpha-D-galacturonosyl)n + (1,4-alpha-D-galacturonosyl)m.. Involved in maceration and soft-rotting of plant tissue. Hydrolyzes the 1,4-alpha glycosidic bonds of de-esterified pectate in the smooth region of the plant cell wall. The chain is Endopolygalacturonase II from Aspergillus niger.